The chain runs to 745 residues: uncharacterized protein (745 aa).

The region spanning 158-256 is the HTH araC/xylS-type domain; it reads NQVCDYIELH…HQTPKQYRGD (99 aa). 2 consecutive DNA-binding regions (H-T-H motif) follow at residues 175-196 and 223-246; these read SELSEYVGWSESHLSKKFAESL and ITDIALQNGFSSAASFARTFKHFT.

This is an uncharacterized protein from Staphylococcus aureus (strain MRSA252).